The chain runs to 275 residues: Acetyl-coenzyme A carboxylase carboxyl transferase subunit beta (275 aa).

In terms of domain architecture, CoA carboxyltransferase N-terminal spans 21–275; it reads GLWIKCQCGA…IKIIGMHQAG (255 aa). C26, C28, C44, and C47 together coordinate Zn(2+). The C4-type zinc finger occupies 26–47; it reads CQCGAILFAKDLERNLKVCQKC.

It belongs to the AccD/PCCB family. Acetyl-CoA carboxylase is a heterohexamer composed of biotin carboxyl carrier protein (AccB), biotin carboxylase (AccC) and two subunits each of ACCase subunit alpha (AccA) and ACCase subunit beta (AccD). Requires Zn(2+) as cofactor.

Its subcellular location is the cytoplasm. It carries out the reaction N(6)-carboxybiotinyl-L-lysyl-[protein] + acetyl-CoA = N(6)-biotinyl-L-lysyl-[protein] + malonyl-CoA. It functions in the pathway lipid metabolism; malonyl-CoA biosynthesis; malonyl-CoA from acetyl-CoA: step 1/1. Functionally, component of the acetyl coenzyme A carboxylase (ACC) complex. Biotin carboxylase (BC) catalyzes the carboxylation of biotin on its carrier protein (BCCP) and then the CO(2) group is transferred by the transcarboxylase to acetyl-CoA to form malonyl-CoA. The sequence is that of Acetyl-coenzyme A carboxylase carboxyl transferase subunit beta from Desulforudis audaxviator (strain MP104C).